A 554-amino-acid chain; its full sequence is Arginine--tRNA ligase (554 aa).

Positions 132–142 match the 'HIGH' region motif; sequence ANPTGPIHLGG.

Belongs to the class-I aminoacyl-tRNA synthetase family. Monomer.

The protein localises to the cytoplasm. It catalyses the reaction tRNA(Arg) + L-arginine + ATP = L-arginyl-tRNA(Arg) + AMP + diphosphate. The polypeptide is Arginine--tRNA ligase (Kineococcus radiotolerans (strain ATCC BAA-149 / DSM 14245 / SRS30216)).